The sequence spans 208 residues: Ribosomal RNA large subunit methyltransferase E (208 aa).

The S-adenosyl-L-methionine site is built by glycine 63, tryptophan 65, aspartate 83, aspartate 99, and aspartate 124. Catalysis depends on lysine 164, which acts as the Proton acceptor.

Belongs to the class I-like SAM-binding methyltransferase superfamily. RNA methyltransferase RlmE family.

The protein resides in the cytoplasm. It catalyses the reaction uridine(2552) in 23S rRNA + S-adenosyl-L-methionine = 2'-O-methyluridine(2552) in 23S rRNA + S-adenosyl-L-homocysteine + H(+). Specifically methylates the uridine in position 2552 of 23S rRNA at the 2'-O position of the ribose in the fully assembled 50S ribosomal subunit. In Alcanivorax borkumensis (strain ATCC 700651 / DSM 11573 / NCIMB 13689 / SK2), this protein is Ribosomal RNA large subunit methyltransferase E.